The primary structure comprises 515 residues: Gamma aminobutyrate transaminase 1, mitochondrial (515 aa).

The N-terminal 57 residues, 1-57 (MAKISRLFGSTVKAAITAQAGFHGKRIPAVSSLQEHIVKSTPARYNSTQACLENDIS), are a transit peptide targeting the mitochondrion. Position 172-173 (172-173 (GS)) interacts with pyridoxal 5'-phosphate. Y205 lines the substrate pocket. D312 contributes to the pyridoxal 5'-phosphate binding site. K341 serves as a coordination point for substrate. Residue K341 is modified to N6-(pyridoxal phosphate)lysine.

It belongs to the class-III pyridoxal-phosphate-dependent aminotransferase family. As to expression, expressed in leaves, roots, stems, flowers and fruits.

Its subcellular location is the mitochondrion. It carries out the reaction 4-aminobutanoate + pyruvate = succinate semialdehyde + L-alanine. The enzyme catalyses 4-aminobutanoate + glyoxylate = succinate semialdehyde + glycine. In terms of biological role, transaminase that degrades gamma-amino butyric acid (GABA) and uses pyruvate or glyoxylate as amino-group acceptor. Cannot use beta-alanine, ornithine, acetylornithine, serine, glycine, asparagine, glutamine, glutamate, valine, leucine, isoleucine, methionine, phenylalanine, histidine, lysine, arginine, aspartate, threonine, tyrosine, tryptophan, proline, or cysteine as amino donors. Acts predominantly in vegetative tissues. The protein is Gamma aminobutyrate transaminase 1, mitochondrial (GABA-TP1) of Solanum lycopersicum (Tomato).